The following is a 220-amino-acid chain: Charged multivesicular body protein 3 (220 aa).

The N-myristoyl glycine moiety is linked to residue G2. A coiled-coil region spans residues 22–54 (KIRKEMRVIDRQIRDIQREQEKVKRSIKESAKK). Residues 168-169 (IL) are important for autoinhibitory function. The disordered stretch occupies residues 181–220 (PSKVTDALPEPEITGAMAASDEEEEEDLEAMHSRLAALRS). An MIT-interacting motif motif is present at residues 201–209 (DEEEEEDLE). 2 interaction with STAMBP regions span residues 203 to 207 (EEEED) and 219 to 220 (RS).

It belongs to the SNF7 family. As to quaternary structure, probable core component of the endosomal sorting required for transport complex III (ESCRT-III). ESCRT-III components are thought to multimerize to form a flat lattice on the perimeter membrane of the endosome. Several assembly forms of ESCRT-III may exist that interact and act sequentially.

The protein resides in the cytoplasm. The protein localises to the cytosol. Its subcellular location is the membrane. It localises to the endosome. It is found in the late endosome membrane. Probable core component of the endosomal sorting required for transport complex III (ESCRT-III) which is involved in multivesicular bodies (MVBs) formation and sorting of endosomal cargo proteins into MVBs. MVBs contain intraluminal vesicles (ILVs) that are generated by invagination and scission from the limiting membrane of the endosome and mostly are delivered to lysosomes enabling degradation of membrane proteins, such as stimulated growth factor receptors, lysosomal enzymes and lipids. Involved in late stages of cytokinesis. Plays a role in endosomal sorting/trafficking of EGF receptor. This Xenopus laevis (African clawed frog) protein is Charged multivesicular body protein 3 (chmp3).